The following is a 195-amino-acid chain: dTTP/UTP pyrophosphatase (195 aa).

Catalysis depends on D77, which acts as the Proton acceptor.

This sequence belongs to the Maf family. YhdE subfamily. Requires a divalent metal cation as cofactor.

The protein localises to the cytoplasm. It catalyses the reaction dTTP + H2O = dTMP + diphosphate + H(+). The enzyme catalyses UTP + H2O = UMP + diphosphate + H(+). Nucleoside triphosphate pyrophosphatase that hydrolyzes dTTP and UTP. May have a dual role in cell division arrest and in preventing the incorporation of modified nucleotides into cellular nucleic acids. This chain is dTTP/UTP pyrophosphatase, found in Flavobacterium psychrophilum (strain ATCC 49511 / DSM 21280 / CIP 103535 / JIP02/86).